Here is a 251-residue protein sequence, read N- to C-terminus: Triosephosphate isomerase (251 aa).

9 to 11 (NWK) provides a ligand contact to substrate. Histidine 95 acts as the Electrophile in catalysis. Glutamate 167 acts as the Proton acceptor in catalysis. Substrate-binding positions include glycine 173, serine 213, and 234-235 (GG).

It belongs to the triosephosphate isomerase family. Homodimer.

The protein resides in the cytoplasm. The enzyme catalyses D-glyceraldehyde 3-phosphate = dihydroxyacetone phosphate. It participates in carbohydrate biosynthesis; gluconeogenesis. It functions in the pathway carbohydrate degradation; glycolysis; D-glyceraldehyde 3-phosphate from glycerone phosphate: step 1/1. In terms of biological role, involved in the gluconeogenesis. Catalyzes stereospecifically the conversion of dihydroxyacetone phosphate (DHAP) to D-glyceraldehyde-3-phosphate (G3P). This Trichlorobacter lovleyi (strain ATCC BAA-1151 / DSM 17278 / SZ) (Geobacter lovleyi) protein is Triosephosphate isomerase.